A 114-amino-acid polypeptide reads, in one-letter code: Large ribosomal subunit protein uL22 (114 aa).

Belongs to the universal ribosomal protein uL22 family. Part of the 50S ribosomal subunit.

Its function is as follows. This protein binds specifically to 23S rRNA; its binding is stimulated by other ribosomal proteins, e.g. L4, L17, and L20. It is important during the early stages of 50S assembly. It makes multiple contacts with different domains of the 23S rRNA in the assembled 50S subunit and ribosome. Functionally, the globular domain of the protein is located near the polypeptide exit tunnel on the outside of the subunit, while an extended beta-hairpin is found that lines the wall of the exit tunnel in the center of the 70S ribosome. This is Large ribosomal subunit protein uL22 from Streptococcus pyogenes serotype M5 (strain Manfredo).